Here is a 260-residue protein sequence, read N- to C-terminus: Indole-3-glycerol phosphate synthase (260 aa).

This sequence belongs to the TrpC family.

It catalyses the reaction 1-(2-carboxyphenylamino)-1-deoxy-D-ribulose 5-phosphate + H(+) = (1S,2R)-1-C-(indol-3-yl)glycerol 3-phosphate + CO2 + H2O. Its pathway is amino-acid biosynthesis; L-tryptophan biosynthesis; L-tryptophan from chorismate: step 4/5. This chain is Indole-3-glycerol phosphate synthase, found in Leifsonia xyli subsp. xyli (strain CTCB07).